The chain runs to 426 residues: Cytochrome c biogenesis protein CcsB (426 aa).

Transmembrane regions (helical) follow at residues 11-31 (LRVAIVLLFLIALASAVGTAI), 69-89 (SVWFLSLLAWLGLALILCSWR), and 159-179 (VGPLLVHTGLILLMLGAVWGV).

It belongs to the Ccs1/CcsB family. As to quaternary structure, may interact with CcsA.

The protein resides in the cellular thylakoid membrane. In terms of biological role, required during biogenesis of c-type cytochromes (cytochrome c6 and cytochrome f) at the step of heme attachment. This is Cytochrome c biogenesis protein CcsB from Synechococcus sp. (strain CC9902).